A 308-amino-acid polypeptide reads, in one-letter code: Methionyl-tRNA formyltransferase (308 aa).

Residue 110–113 (SLLP) coordinates (6S)-5,6,7,8-tetrahydrofolate.

Belongs to the Fmt family.

It catalyses the reaction L-methionyl-tRNA(fMet) + (6R)-10-formyltetrahydrofolate = N-formyl-L-methionyl-tRNA(fMet) + (6S)-5,6,7,8-tetrahydrofolate + H(+). In terms of biological role, attaches a formyl group to the free amino group of methionyl-tRNA(fMet). The formyl group appears to play a dual role in the initiator identity of N-formylmethionyl-tRNA by promoting its recognition by IF2 and preventing the misappropriation of this tRNA by the elongation apparatus. The chain is Methionyl-tRNA formyltransferase from Neisseria meningitidis serogroup C / serotype 2a (strain ATCC 700532 / DSM 15464 / FAM18).